Consider the following 70-residue polypeptide: ATP synthase subunit c (70 aa).

2 consecutive transmembrane segments (helical) span residues 1-21 and 47-67; these read MNFL…SYGN and FIGV…SFLI.

Belongs to the ATPase C chain family. In terms of assembly, F-type ATPases have 2 components, F(1) - the catalytic core - and F(0) - the membrane proton channel. F(1) has five subunits: alpha(3), beta(3), gamma(1), delta(1), epsilon(1). F(0) has three main subunits: a(1), b(2) and c(10-14). The alpha and beta chains form an alternating ring which encloses part of the gamma chain. F(1) is attached to F(0) by a central stalk formed by the gamma and epsilon chains, while a peripheral stalk is formed by the delta and b chains.

The protein localises to the cell membrane. In terms of biological role, f(1)F(0) ATP synthase produces ATP from ADP in the presence of a proton or sodium gradient. F-type ATPases consist of two structural domains, F(1) containing the extramembraneous catalytic core and F(0) containing the membrane proton channel, linked together by a central stalk and a peripheral stalk. During catalysis, ATP synthesis in the catalytic domain of F(1) is coupled via a rotary mechanism of the central stalk subunits to proton translocation. Functionally, key component of the F(0) channel; it plays a direct role in translocation across the membrane. A homomeric c-ring of between 10-14 subunits forms the central stalk rotor element with the F(1) delta and epsilon subunits. In Latilactobacillus sakei subsp. sakei (strain 23K) (Lactobacillus sakei subsp. sakei), this protein is ATP synthase subunit c.